A 1744-amino-acid chain; its full sequence is Tanabin (1744 aa).

Residues 1-12 (MEGYLASVSLGE) form a head region. The tract at residues 8-48 (VSLGEESTQMWSLNKRLEAYLSRVKALEEENELLRKEIHSL) is coil 1A. Residues 13 to 320 (ESTQMWSLNK…SLLEAESTRI (308 aa)) enclose the IF rod domain. Residues 49–60 (RSSKSERCWKKK) are linker 1. The segment at 61–156 (HHEEMMKLRD…RDHEEEKALM (96 aa)) is coil 1B. The segment at 157–179 (EEEIASFSQRLENFRVAPVAFKP) is linker 12. Positions 180-193 (VEVDDYARKLSEIW) are coil 2A. The tract at residues 194 to 199 (QGAVEE) is linker 2. Residues 200–314 (YKSEVSVLEA…EVATYRSLLE (115 aa)) are coil 2B. Residues 315-1744 (AESTRIYTDY…KKALRWKRMF (1430 aa)) are tail. Basic and acidic residues-rich tracts occupy residues 341-371 (RRRQ…KNEL) and 785-815 (HSHH…DKSS). Disordered stretches follow at residues 341–372 (RRRQ…NELQ), 785–816 (HSHH…KSSE), 976–996 (EENQ…DIEE), 1032–1093 (SMED…QQED), 1340–1470 (DSDL…FGDV), 1485–1506 (SGLA…SMEN), and 1560–1722 (AREK…LNGH). A compositionally biased stretch (polar residues) spans 980-990 (LSENEGNQNFG). Acidic residues predominate over residues 1034–1056 (EDEEEQNNPETEDNIGLEQESDQ). Over residues 1074 to 1086 (VVFKPEDMSDKSE) the composition is skewed to basic and acidic residues. The span at 1340-1351 (DSDLESTEEQVQ) shows a compositional bias: acidic residues. Positions 1352–1367 (ETERIPFKPEDSKMEN) are enriched in basic and acidic residues. Acidic residues predominate over residues 1368 to 1377 (ENSESEESVD). A compositionally biased stretch (basic and acidic residues) spans 1386–1398 (HKSEEFEISKDYQ). Positions 1412 to 1421 (LEDEFEDLTE) are enriched in acidic residues. Positions 1423 to 1432 (PDVHEEHQNN) are enriched in basic and acidic residues. Positions 1433–1442 (DDSGASTFIT) are enriched in polar residues. Over residues 1445 to 1460 (DEDKEREVRESVSKDE) the composition is skewed to basic and acidic residues. A compositionally biased stretch (acidic residues) spans 1496-1505 (DNEESEDSME). Composition is skewed to polar residues over residues 1576–1586 (EFTNENQSASP), 1597–1621 (EDSV…TSIS), and 1629–1639 (SNISTTEQSST). Over residues 1680 to 1691 (RSEDEELDDEGS) the composition is skewed to acidic residues. The span at 1698-1709 (NDEKANGEHKDV) shows a compositional bias: basic and acidic residues.

It belongs to the intermediate filament family. In terms of tissue distribution, growth cones of embryonic vertebrate neurons.

The sequence is that of Tanabin from Xenopus laevis (African clawed frog).